Here is a 128-residue protein sequence, read N- to C-terminus: Large ribosomal subunit protein uL22 (128 aa).

It belongs to the universal ribosomal protein uL22 family. As to quaternary structure, part of the 50S ribosomal subunit.

This protein binds specifically to 23S rRNA; its binding is stimulated by other ribosomal proteins, e.g. L4, L17, and L20. It is important during the early stages of 50S assembly. It makes multiple contacts with different domains of the 23S rRNA in the assembled 50S subunit and ribosome. Functionally, the globular domain of the protein is located near the polypeptide exit tunnel on the outside of the subunit, while an extended beta-hairpin is found that lines the wall of the exit tunnel in the center of the 70S ribosome. The chain is Large ribosomal subunit protein uL22 from Rhodopseudomonas palustris (strain BisA53).